Here is a 49-residue protein sequence, read N- to C-terminus: Large ribosomal subunit protein bL33 (49 aa).

It belongs to the bacterial ribosomal protein bL33 family.

The chain is Large ribosomal subunit protein bL33 from Streptococcus gordonii (strain Challis / ATCC 35105 / BCRC 15272 / CH1 / DL1 / V288).